The chain runs to 392 residues: MTATAPITQDVMTLPRKLPEGGPLNIVGLTREELMAALVAAGTPERQARMRMGQVWQWVYHWGVRDFAQMTNLAKDYRALLAEHFAIVLPEVVTRQISADGTRKYLIRIAGGHEVETVYIPEEGRGTLCVSSQVGCTLTCSFCHTGTQKLVRNLTAGEIVGQVMLVRDDLGEWPERGAPKDETRLVSNLVLMGMGEPLYNFENVRNAMKVVMDGEGLSLSRRRITLSTSGVVPEIARTAEEIGCQLAISFHATTDEVRDILVPINKRWNIRTLLDSLRDYPRLSNSERITFEYVMLDGINDSDADARRLVKLISGIPSKINLIPFNEWPGAPYRRSTPERIAAFADIIYKAGYASPIRTPRGEDIMAACGQLKSATERARKSRAQIAAETGL.

Glutamate 116 functions as the Proton acceptor in the catalytic mechanism. Positions 122-364 (EEGRGTLCVS…SPIRTPRGED (243 aa)) constitute a Radical SAM core domain. A disulfide bond links cysteine 129 and cysteine 369. The [4Fe-4S] cluster site is built by cysteine 136, cysteine 140, and cysteine 143. S-adenosyl-L-methionine contacts are provided by residues 195–196 (GE), serine 227, 249–251 (SFH), and asparagine 326. Cysteine 369 (S-methylcysteine intermediate) is an active-site residue.

It belongs to the radical SAM superfamily. RlmN family. Requires [4Fe-4S] cluster as cofactor.

Its subcellular location is the cytoplasm. It catalyses the reaction adenosine(2503) in 23S rRNA + 2 reduced [2Fe-2S]-[ferredoxin] + 2 S-adenosyl-L-methionine = 2-methyladenosine(2503) in 23S rRNA + 5'-deoxyadenosine + L-methionine + 2 oxidized [2Fe-2S]-[ferredoxin] + S-adenosyl-L-homocysteine. It carries out the reaction adenosine(37) in tRNA + 2 reduced [2Fe-2S]-[ferredoxin] + 2 S-adenosyl-L-methionine = 2-methyladenosine(37) in tRNA + 5'-deoxyadenosine + L-methionine + 2 oxidized [2Fe-2S]-[ferredoxin] + S-adenosyl-L-homocysteine. Functionally, specifically methylates position 2 of adenine 2503 in 23S rRNA and position 2 of adenine 37 in tRNAs. m2A2503 modification seems to play a crucial role in the proofreading step occurring at the peptidyl transferase center and thus would serve to optimize ribosomal fidelity. In Cereibacter sphaeroides (strain ATCC 17025 / ATH 2.4.3) (Rhodobacter sphaeroides), this protein is Dual-specificity RNA methyltransferase RlmN.